We begin with the raw amino-acid sequence, 309 residues long: Probable manganese-dependent inorganic pyrophosphatase (309 aa).

Positions 9, 13, 15, 75, 97, and 149 each coordinate Mn(2+).

Belongs to the PPase class C family. The cofactor is Mn(2+).

Its subcellular location is the cytoplasm. It carries out the reaction diphosphate + H2O = 2 phosphate + H(+). In Bacillus cereus (strain AH187), this protein is Probable manganese-dependent inorganic pyrophosphatase.